A 352-amino-acid polypeptide reads, in one-letter code: Tropomodulin-3 (352 aa).

At Ser25 the chain carries Phosphoserine.

It belongs to the tropomodulin family. Binds to the N-terminus of tropomyosin and to actin. Interacts with FLII. In terms of tissue distribution, ubiquitous.

Its subcellular location is the cytoplasm. The protein localises to the cytoskeleton. In terms of biological role, blocks the elongation and depolymerization of the actin filaments at the pointed end. The Tmod/TM complex contributes to the formation of the short actin protofilament, which in turn defines the geometry of the membrane skeleton. This chain is Tropomodulin-3 (Tmod3), found in Mus musculus (Mouse).